We begin with the raw amino-acid sequence, 353 residues long: Chorismate synthase (353 aa).

NADP(+) contacts are provided by Arg48 and Arg54. Residues 125 to 127, 238 to 239, Gly278, 293 to 297, and Arg319 contribute to the FMN site; these read RSS, NA, and KPTSS.

The protein belongs to the chorismate synthase family. Homotetramer. It depends on FMNH2 as a cofactor.

It carries out the reaction 5-O-(1-carboxyvinyl)-3-phosphoshikimate = chorismate + phosphate. It participates in metabolic intermediate biosynthesis; chorismate biosynthesis; chorismate from D-erythrose 4-phosphate and phosphoenolpyruvate: step 7/7. In terms of biological role, catalyzes the anti-1,4-elimination of the C-3 phosphate and the C-6 proR hydrogen from 5-enolpyruvylshikimate-3-phosphate (EPSP) to yield chorismate, which is the branch point compound that serves as the starting substrate for the three terminal pathways of aromatic amino acid biosynthesis. This reaction introduces a second double bond into the aromatic ring system. The chain is Chorismate synthase from Bordetella parapertussis (strain 12822 / ATCC BAA-587 / NCTC 13253).